A 485-amino-acid polypeptide reads, in one-letter code: MSKFEKEQIAFPNDFRRNYISDQLHQKYDHKTNTELIHLNVKVSVAGRIMTRRIMGKSSFMTLRDGGGCIQLYFTIHDMKSQTMYFKVIKTWDIGDLIGVKGVLFKTRTGELSIHCKEMVLLTKSLRSLPDKFHGLRNIETKYRQRYLDLIVNEESMKTFKIRSLIISEIRRFMHQHHFIEVETPMMHHIPGGALARPFVTYHNKLNMNMYLRIAPELYLKKLIIGGFEKIFEINRNFRNESISPYHNPEFTMMEIYEAYVDYNNMIIFVQELFRTLTERILRKSVIEYGDYSLDFEKPFIKMSIKEAIMYYLPDIRTKNIDDILVVFDILKFFKVPSDNQWTLEKLHMVLFEEIVSKKIIQPTCITHYPIEVSPLARCSNDNAKIADRFELFIAGHEIGNGFSELNDPDDQRNRFLKQATEKMINNDIDQDESNMPYDKDYIVALEYGLPPTAGVGIGIDRLVMLLTNKHNIRDVILFPTLRSK.

Mg(2+) contacts are provided by Glu391 and Glu398.

The protein belongs to the class-II aminoacyl-tRNA synthetase family. Homodimer. Requires Mg(2+) as cofactor.

Its subcellular location is the cytoplasm. The enzyme catalyses tRNA(Lys) + L-lysine + ATP = L-lysyl-tRNA(Lys) + AMP + diphosphate. In Blochmanniella floridana, this protein is Lysine--tRNA ligase.